A 345-amino-acid chain; its full sequence is Mycothiol acetyltransferase (345 aa).

N-acetyltransferase domains are found at residues 6–149 (DTYE…KAME) and 164–345 (FEVL…RGRL). Glu-39 lines the 1D-myo-inositol 2-(L-cysteinylamino)-2-deoxy-alpha-D-glucopyranoside pocket. 76–78 (LAV) is an acetyl-CoA binding site. Positions 198, 261, and 277 each coordinate 1D-myo-inositol 2-(L-cysteinylamino)-2-deoxy-alpha-D-glucopyranoside. Acetyl-CoA is bound by residues 281-283 (VCL) and 288-294 (RGRGLGQ). 1D-myo-inositol 2-(L-cysteinylamino)-2-deoxy-alpha-D-glucopyranoside is bound at residue Tyr-315.

The protein belongs to the acetyltransferase family. MshD subfamily. In terms of assembly, monomer.

It catalyses the reaction 1D-myo-inositol 2-(L-cysteinylamino)-2-deoxy-alpha-D-glucopyranoside + acetyl-CoA = mycothiol + CoA + H(+). In terms of biological role, catalyzes the transfer of acetyl from acetyl-CoA to desacetylmycothiol (Cys-GlcN-Ins) to form mycothiol. This chain is Mycothiol acetyltransferase, found in Corynebacterium jeikeium (strain K411).